The primary structure comprises 135 residues: Interleukin-4 (135 aa).

Residues 1–24 form the signal peptide; that stretch reads MGLTSQLIPALVCLLVCTSHFVHG. 2 disulfide bridges follow: C48–C85 and C70–C105. Residues N62 and N96 are each glycosylated (N-linked (GlcNAc...) asparagine).

The protein belongs to the IL-4/IL-13 family.

The protein resides in the secreted. In terms of biological role, participates in at least several B-cell activation processes as well as of other cell types. It is a costimulator of DNA-synthesis. It induces the expression of class II MHC molecules on resting B-cells. It enhances both secretion and cell surface expression of IgE and IgG1. It also regulates the expression of the low affinity Fc receptor for IgE (CD23) on both lymphocytes and monocytes. Positively regulates IL31RA expression in macrophages. Stimulates autophagy in dendritic cells by interfering with mTORC1 signaling and through the induction of RUFY4. In Ovis aries (Sheep), this protein is Interleukin-4 (IL4).